Reading from the N-terminus, the 506-residue chain is Galactose/methyl galactoside import ATP-binding protein MglA (506 aa).

2 ABC transporter domains span residues leucine 14–serine 249 and valine 264–leucine 506. Glycine 46–serine 53 is a binding site for ATP.

It belongs to the ABC transporter superfamily. Galactose/methyl galactoside importer (TC 3.A.1.2.3) family. The complex is composed of one ATP-binding protein (MglA), two transmembrane proteins (MglC) and a solute-binding protein (MglB).

It is found in the cell inner membrane. It catalyses the reaction D-galactose(out) + ATP + H2O = D-galactose(in) + ADP + phosphate + H(+). The catalysed reaction is methyl beta-D-galactoside(out) + ATP + H2O = methyl beta-D-galactoside(in) + ADP + phosphate + H(+). Part of the ABC transporter complex MglABC involved in galactose/methyl galactoside import. Responsible for energy coupling to the transport system. This Yersinia pestis bv. Antiqua (strain Antiqua) protein is Galactose/methyl galactoside import ATP-binding protein MglA.